Here is a 151-residue protein sequence, read N- to C-terminus: Histone H2B.1 (151 aa).

Basic and acidic residues-rich tracts occupy residues 1–28 and 36–51; these read MAPK…EKAP and EKRL…GEGK. The tract at residues 1 to 58 is disordered; the sequence is MAPKAEKKPAAKKPAEEEPATEKVEKAPAGKKPKAEKRLPAGKSKEGGEGKKGKKKAK. An N6-acetyllysine mark is found at Lys7 and Lys37. A Glycyl lysine isopeptide (Lys-Gly) (interchain with G-Cter in ubiquitin) cross-link involves residue Lys147.

This sequence belongs to the histone H2B family. In terms of assembly, the nucleosome is a histone octamer containing two molecules each of H2A, H2B, H3 and H4 assembled in one H3-H4 heterotetramer and two H2A-H2B heterodimers. The octamer wraps approximately 147 bp of DNA. Post-translationally, can be acetylated to form H2BK6ac and H2BK33ac. Monoubiquitinated to form H2BK143ub1; may give a specific tag for epigenetic transcriptional activation.

It localises to the nucleus. The protein localises to the chromosome. Core component of nucleosome. Nucleosomes wrap and compact DNA into chromatin, limiting DNA accessibility to the cellular machineries which require DNA as a template. Histones thereby play a central role in transcription regulation, DNA repair, DNA replication and chromosomal stability. DNA accessibility is regulated via a complex set of post-translational modifications of histones, also called histone code, and nucleosome remodeling. The protein is Histone H2B.1 of Zea mays (Maize).